The chain runs to 331 residues: 5,10-methylenetetrahydromethanopterin reductase (331 aa).

It belongs to the mer family.

It is found in the cytoplasm. It carries out the reaction 5-methyl-5,6,7,8-tetrahydromethanopterin + oxidized coenzyme F420-(gamma-L-Glu)(n) + H(+) = 5,10-methylenetetrahydromethanopterin + reduced coenzyme F420-(gamma-L-Glu)(n). It participates in one-carbon metabolism; methanogenesis from CO(2); methyl-coenzyme M from 5,10-methylene-5,6,7,8-tetrahydromethanopterin: step 1/2. In terms of biological role, catalyzes the reversible reduction of methylene-H(4)MPT to methyl-H(4)MPT. The polypeptide is 5,10-methylenetetrahydromethanopterin reductase (Methanocaldococcus jannaschii (strain ATCC 43067 / DSM 2661 / JAL-1 / JCM 10045 / NBRC 100440) (Methanococcus jannaschii)).